The primary structure comprises 430 residues: Enolase (430 aa).

Q167 contacts (2R)-2-phosphoglycerate. E209 acts as the Proton donor in catalysis. Mg(2+) is bound by residues D246, E287, and D314. Positions 339, 368, and 369 each coordinate (2R)-2-phosphoglycerate. The active-site Proton acceptor is K339.

The protein belongs to the enolase family. It depends on Mg(2+) as a cofactor.

Its subcellular location is the cytoplasm. The protein resides in the secreted. It is found in the cell surface. It carries out the reaction (2R)-2-phosphoglycerate = phosphoenolpyruvate + H2O. Its pathway is carbohydrate degradation; glycolysis; pyruvate from D-glyceraldehyde 3-phosphate: step 4/5. Catalyzes the reversible conversion of 2-phosphoglycerate (2-PG) into phosphoenolpyruvate (PEP). It is essential for the degradation of carbohydrates via glycolysis. This chain is Enolase, found in Synechococcus sp. (strain ATCC 27144 / PCC 6301 / SAUG 1402/1) (Anacystis nidulans).